Consider the following 220-residue polypeptide: Deoxyribose-phosphate aldolase (220 aa).

Asp-89 functions as the Proton donor/acceptor in the catalytic mechanism. The active-site Schiff-base intermediate with acetaldehyde is Lys-151. The active-site Proton donor/acceptor is the Lys-180.

The protein belongs to the DeoC/FbaB aldolase family. DeoC type 1 subfamily.

Its subcellular location is the cytoplasm. It catalyses the reaction 2-deoxy-D-ribose 5-phosphate = D-glyceraldehyde 3-phosphate + acetaldehyde. It participates in carbohydrate degradation; 2-deoxy-D-ribose 1-phosphate degradation; D-glyceraldehyde 3-phosphate and acetaldehyde from 2-deoxy-alpha-D-ribose 1-phosphate: step 2/2. Functionally, catalyzes a reversible aldol reaction between acetaldehyde and D-glyceraldehyde 3-phosphate to generate 2-deoxy-D-ribose 5-phosphate. The protein is Deoxyribose-phosphate aldolase of Streptococcus pneumoniae (strain Taiwan19F-14).